Consider the following 962-residue polypeptide: Leucine--tRNA ligase (962 aa).

The 'HIGH' region motif lies at 41–51; it reads PYLNGNLHAGH. A 'KMSKS' region motif is present at residues 631 to 635; the sequence is KMSKS. Lys-634 lines the ATP pocket.

This sequence belongs to the class-I aminoacyl-tRNA synthetase family.

The protein localises to the cytoplasm. The enzyme catalyses tRNA(Leu) + L-leucine + ATP = L-leucyl-tRNA(Leu) + AMP + diphosphate. This chain is Leucine--tRNA ligase, found in Methanococcoides burtonii (strain DSM 6242 / NBRC 107633 / OCM 468 / ACE-M).